A 414-amino-acid chain; its full sequence is Cyclic di-GMP phosphodiesterase PA4108 (414 aa).

The region spanning Ile-133–Glu-330 is the HD-GYP domain. His-160, His-192, Asp-193, His-221, His-246, and His-247 together coordinate a divalent metal cation.

As to quaternary structure, monomer.

It carries out the reaction 3',3'-c-di-GMP + 2 H2O = 2 GMP + 2 H(+). Activated by Mg(2+) and Mn(2+). Phosphodiesterase (PDE) that catalyzes the hydrolysis of cyclic diguanylate (c-di-GMP) to GMP. Hydrolyzes c-di-GMP to GMP in a two-step reaction, via the linear intermediate 5'-phosphoguanylyl(3'-&gt;5')guanosine (pGpG). In vitro, can use pGpG as an alternative substrate and hydrolyze it into GMP. Acts in regulation of motility, synthesis of virulence determinants and biofilm architecture. This is Cyclic di-GMP phosphodiesterase PA4108 from Pseudomonas aeruginosa (strain ATCC 15692 / DSM 22644 / CIP 104116 / JCM 14847 / LMG 12228 / 1C / PRS 101 / PAO1).